The sequence spans 378 residues: Succinyl-diaminopimelate desuccinylase (378 aa).

H68 contacts Zn(2+). Residue D70 is part of the active site. D101 contacts Zn(2+). Residue E135 is the Proton acceptor of the active site. Residues E136, E164, and H350 each coordinate Zn(2+).

The protein belongs to the peptidase M20A family. DapE subfamily. As to quaternary structure, homodimer. Zn(2+) serves as cofactor. Co(2+) is required as a cofactor.

The catalysed reaction is N-succinyl-(2S,6S)-2,6-diaminopimelate + H2O = (2S,6S)-2,6-diaminopimelate + succinate. It functions in the pathway amino-acid biosynthesis; L-lysine biosynthesis via DAP pathway; LL-2,6-diaminopimelate from (S)-tetrahydrodipicolinate (succinylase route): step 3/3. Catalyzes the hydrolysis of N-succinyl-L,L-diaminopimelic acid (SDAP), forming succinate and LL-2,6-diaminopimelate (DAP), an intermediate involved in the bacterial biosynthesis of lysine and meso-diaminopimelic acid, an essential component of bacterial cell walls. This is Succinyl-diaminopimelate desuccinylase from Vibrio atlanticus (strain LGP32) (Vibrio splendidus (strain Mel32)).